A 363-amino-acid polypeptide reads, in one-letter code: 5-formaminoimidazole-4-carboxamide-1-(beta)-D-ribofuranosyl 5'-monophosphate synthetase (363 aa).

H29 and S96 together coordinate 5-amino-1-(5-phospho-beta-D-ribosyl)imidazole-4-carboxamide. The ATP-grasp domain maps to 118 to 350; that stretch reads RDILRWESER…MGRRVAREIR (233 aa). ATP-binding positions include 148–210 and E232; that span reads PEEI…TNFC. N260 provides a ligand contact to 5-amino-1-(5-phospho-beta-D-ribosyl)imidazole-4-carboxamide. Q299 and E312 together coordinate Mg(2+).

It belongs to the phosphohexose mutase family. The cofactor is Mg(2+). It depends on Mn(2+) as a cofactor.

It catalyses the reaction 5-amino-1-(5-phospho-beta-D-ribosyl)imidazole-4-carboxamide + formate + ATP = 5-formamido-1-(5-phospho-D-ribosyl)imidazole-4-carboxamide + ADP + phosphate. The protein operates within purine metabolism; IMP biosynthesis via de novo pathway; 5-formamido-1-(5-phospho-D-ribosyl)imidazole-4-carboxamide from 5-amino-1-(5-phospho-D-ribosyl)imidazole-4-carboxamide (formate route): step 1/1. Catalyzes the ATP- and formate-dependent formylation of 5-aminoimidazole-4-carboxamide-1-beta-d-ribofuranosyl 5'-monophosphate (AICAR) to 5-formaminoimidazole-4-carboxamide-1-beta-d-ribofuranosyl 5'-monophosphate (FAICAR) in the absence of folates. This chain is 5-formaminoimidazole-4-carboxamide-1-(beta)-D-ribofuranosyl 5'-monophosphate synthetase, found in Methanothermobacter thermautotrophicus (strain ATCC 29096 / DSM 1053 / JCM 10044 / NBRC 100330 / Delta H) (Methanobacterium thermoautotrophicum).